The chain runs to 48 residues: DNA-directed RNA polymerase subunit Rpo12 (48 aa).

Residues cysteine 9, cysteine 26, and cysteine 29 each contribute to the Zn(2+) site.

This sequence belongs to the archaeal Rpo12/eukaryotic RPC10 RNA polymerase subunit family. As to quaternary structure, part of the RNA polymerase complex. Zn(2+) is required as a cofactor.

It is found in the cytoplasm. It catalyses the reaction RNA(n) + a ribonucleoside 5'-triphosphate = RNA(n+1) + diphosphate. DNA-dependent RNA polymerase (RNAP) catalyzes the transcription of DNA into RNA using the four ribonucleoside triphosphates as substrates. The polypeptide is DNA-directed RNA polymerase subunit Rpo12 (Sulfurisphaera tokodaii (strain DSM 16993 / JCM 10545 / NBRC 100140 / 7) (Sulfolobus tokodaii)).